A 71-amino-acid polypeptide reads, in one-letter code: Small ribosomal subunit protein bS21 (71 aa).

A disordered region spans residues 39–71 (EKPTQERKRKAAAAVKRQLRRSSRDVTKRQRLY). The segment covering 45 to 59 (RKRKAAAAVKRQLRR) has biased composition (basic residues). Over residues 60-71 (SSRDVTKRQRLY) the composition is skewed to basic and acidic residues.

This sequence belongs to the bacterial ribosomal protein bS21 family.

This Stenotrophomonas maltophilia (strain K279a) protein is Small ribosomal subunit protein bS21.